Consider the following 123-residue polypeptide: MADLAKIVEDLSALTVLEAAELSKLLEEKWGVSASAAVAVAAAPAAGGAAAEEKTEFDVILTGDGGKKINVIKEIRAITGLGLTDAKALVEGAPKPVKEGVAKDEAEKLKKQLEAAGATVELK.

This sequence belongs to the bacterial ribosomal protein bL12 family. Homodimer. Part of the ribosomal stalk of the 50S ribosomal subunit. Forms a multimeric L10(L12)X complex, where L10 forms an elongated spine to which 2 to 4 L12 dimers bind in a sequential fashion. Binds GTP-bound translation factors.

In terms of biological role, forms part of the ribosomal stalk which helps the ribosome interact with GTP-bound translation factors. Is thus essential for accurate translation. The chain is Large ribosomal subunit protein bL12 from Zymomonas mobilis subsp. mobilis (strain ATCC 31821 / ZM4 / CP4).